The following is a 210-amino-acid chain: Probable membrane protein Rv1733c (210 aa).

Transmembrane regions (helical) follow at residues 43 to 63 (AVVM…AAAA) and 165 to 185 (ALAA…LLAL).

It is found in the cell membrane. This is Probable membrane protein Rv1733c from Mycobacterium tuberculosis (strain ATCC 25618 / H37Rv).